The primary structure comprises 318 residues: GPN-loop GTPase 2 (318 aa).

29 to 34 lines the GTP pocket; it reads GSGKST. A Gly-Pro-Asn (GPN)-loop; involved in dimer interface motif is present at residues 85–87; that stretch reads GPN. Residue 187 to 190 participates in GTP binding; it reads SKMD.

It belongs to the GPN-loop GTPase family. As to quaternary structure, heterodimers with gpn1 or gpn3. Binds to RNA polymerase II (RNAPII).

Its function is as follows. Small GTPase required for proper localization of RNA polymerase II and III (RNAPII and RNAPIII). May act at an RNAP assembly step prior to nuclear import. This is GPN-loop GTPase 2 from Xenopus laevis (African clawed frog).